The chain runs to 345 residues: Protein-glutamate methylesterase/protein-glutamine glutaminase 2 (345 aa).

The Response regulatory domain occupies 1 to 116 (MVVDDSAVVR…KQFLVDASDD (116 aa)). At Asp50 the chain carries 4-aspartylphosphate. The 192-residue stretch at 154–345 (LQTTERVVAL…AREIMAQMAG (192 aa)) folds into the CheB-type methylesterase domain. Active-site residues include Ser166, His192, and Asp288.

It belongs to the CheB family. Post-translationally, phosphorylated by CheA. Phosphorylation of the N-terminal regulatory domain activates the methylesterase activity.

It is found in the cytoplasm. It carries out the reaction [protein]-L-glutamate 5-O-methyl ester + H2O = L-glutamyl-[protein] + methanol + H(+). It catalyses the reaction L-glutaminyl-[protein] + H2O = L-glutamyl-[protein] + NH4(+). Functionally, involved in chemotaxis. Part of a chemotaxis signal transduction system that modulates chemotaxis in response to various stimuli. Catalyzes the demethylation of specific methylglutamate residues introduced into the chemoreceptors (methyl-accepting chemotaxis proteins or MCP) by CheR. Also mediates the irreversible deamidation of specific glutamine residues to glutamic acid. The polypeptide is Protein-glutamate methylesterase/protein-glutamine glutaminase 2 (Albidiferax ferrireducens (strain ATCC BAA-621 / DSM 15236 / T118) (Rhodoferax ferrireducens)).